Here is a 376-residue protein sequence, read N- to C-terminus: Nuclear hormone receptor family member nhr-124 (376 aa).

The segment at residues 11-89 (PNICAICHQK…LGMRYHNSSE (79 aa)) is a DNA-binding region (nuclear receptor). 2 NR C4-type zinc fingers span residues 14–34 (CAICHQKAFGYNYEVVSCNAC) and 50–72 (CKKGGKCFDGDDLLTSRPKCRSC). In terms of domain architecture, NR LBD spans 125-371 (HLHALNETRY…FSKILTEACR (247 aa)).

The protein belongs to the nuclear hormone receptor family.

The protein localises to the nucleus. Functionally, orphan nuclear receptor. The chain is Nuclear hormone receptor family member nhr-124 (nhr-124) from Caenorhabditis elegans.